We begin with the raw amino-acid sequence, 238 residues long: Tetraspanin-4 (238 aa).

Over 1–13 (MARACLQAVKYLM) the chain is Cytoplasmic. The chain crosses the membrane as a helical span at residues 14–34 (FAFNLLFWLGGCGVLGVGIWL). Over 35–55 (AATQGSFATLSSSFPSLSAAN) the chain is Extracellular. The helical transmembrane segment at 56 to 76 (LLIITGAFVMAIGFVGCLGAI) threads the bilayer. Residues 77–85 (KENKCLLLT) are Cytoplasmic-facing. The helical transmembrane segment at 86–106 (FFLLLLLVFLLEATIAILFFA) threads the bilayer. Residues 107–201 (YTDKIDRYAQ…ETVKVWLQEN (95 aa)) lie on the Extracellular side of the membrane. N-linked (GlcNAc...) asparagine glycans are attached at residues Asn152 and Asn161. The chain crosses the membrane as a helical span at residues 202–222 (LLAVGIFGLCTALVQILGLTF). The Cytoplasmic segment spans residues 223–238 (AMTMYCQVVKADTYCA).

This sequence belongs to the tetraspanin (TM4SF) family. As to quaternary structure, forms a complex with integrins.

The protein localises to the membrane. The sequence is that of Tetraspanin-4 (TSPAN4) from Pongo abelii (Sumatran orangutan).